The chain runs to 223 residues: ATP-dependent Clp protease proteolytic subunit 2 (223 aa).

S118 (nucleophile) is an active-site residue. Residue H143 is part of the active site.

The protein belongs to the peptidase S14 family. In terms of assembly, fourteen ClpP subunits assemble into 2 heptameric rings which stack back to back to give a disk-like structure with a central cavity, resembling the structure of eukaryotic proteasomes.

The protein localises to the cytoplasm. The enzyme catalyses Hydrolysis of proteins to small peptides in the presence of ATP and magnesium. alpha-casein is the usual test substrate. In the absence of ATP, only oligopeptides shorter than five residues are hydrolyzed (such as succinyl-Leu-Tyr-|-NHMec, and Leu-Tyr-Leu-|-Tyr-Trp, in which cleavage of the -Tyr-|-Leu- and -Tyr-|-Trp bonds also occurs).. Its function is as follows. Cleaves peptides in various proteins in a process that requires ATP hydrolysis. Has a chymotrypsin-like activity. Plays a major role in the degradation of misfolded proteins. This is ATP-dependent Clp protease proteolytic subunit 2 from Leifsonia xyli subsp. xyli (strain CTCB07).